Here is a 113-residue protein sequence, read N- to C-terminus: uncharacterized protein (113 aa).

The signal sequence occupies residues 1–22 (MCRFPTFLLIAIAITMLPTILS). A glycan (N-linked (GlcNAc...) asparagine) is linked at Asn-47.

The protein resides in the secreted. This is an uncharacterized protein from Caenorhabditis elegans.